Consider the following 931-residue polypeptide: Protocadherin gamma-B2 (931 aa).

A signal peptide spans 1-30 (MKASSGRCGLVRWLQVLLPFLLSLFPGALP). 6 Cadherin domains span residues 31-133 (VQIR…TPLF), 134-242 (KQTK…PPVF), 243-347 (SQDV…APEV), 348-452 (IVTS…APVF), 453-562 (QQTS…APRV), and 570-675 (DGSA…LPDL). Residues 31-691 (VQIRYSIPEE…SDPQAKLQFY (661 aa)) are Extracellular-facing. 2 N-linked (GlcNAc...) asparagine glycosylation sites follow: N419 and N545. The chain crosses the membrane as a helical span at residues 692 to 712 (LVVALALISVLFFLAVILAIS). The Cytoplasmic segment spans residues 713–931 (LRLRLSSRSD…KKKSGKKEKK (219 aa)). 2 disordered regions span residues 814-840 (DWRF…WPNN) and 901-931 (ATLT…KEKK). The segment covering 815–840 (WRFSQAQRPGTSGSQNGDDTGTWPNN) has biased composition (polar residues). The segment covering 921 to 931 (NKKKSGKKEKK) has biased composition (basic residues).

Its subcellular location is the cell membrane. In terms of biological role, potential calcium-dependent cell-adhesion protein. May be involved in the establishment and maintenance of specific neuronal connections in the brain. The protein is Protocadherin gamma-B2 (PCDHGB2) of Homo sapiens (Human).